A 101-amino-acid polypeptide reads, in one-letter code: uncharacterized protein (101 aa).

The signal sequence occupies residues 1 to 19 (MKFKYLSTPLLFSALLFSA). A lipid anchor (N-palmitoyl cysteine) is attached at Cys20. Cys20 carries the S-diacylglycerol cysteine lipid modification.

The protein belongs to the MG439/MG440 family.

Its subcellular location is the cell membrane. This is an uncharacterized protein from Mycoplasma pneumoniae (strain ATCC 29342 / M129 / Subtype 1) (Mycoplasmoides pneumoniae).